Here is a 182-residue protein sequence, read N- to C-terminus: MEQGKGLAVLILAIILLQGTLAQSIKGNHLVKVYDYQEDGSVLLTCDAEAKNITWFKDGKMIGFLTEDKKKWNLGSNAKDPRGMYQCKGSQNKSKPLQVYYRMCQNCIELNAATISGFLFAEIVSIFVLAVGVYFIAGQDGVRQSRASDKQTLLPNDQLYQPLKDREDDQYSHLQGNQLRRN.

Residues 1 to 22 form the signal peptide; that stretch reads MEQGKGLAVLILAIILLQGTLA. Residues 23–116 lie on the Extracellular side of the membrane; the sequence is QSIKGNHLVK…CIELNAATIS (94 aa). The Ig-like domain maps to 37 to 94; sequence QEDGSVLLTCDAEAKNITWFKDGKMIGFLTEDKKKWNLGSNAKDPRGMYQCKGSQNKS. An intrachain disulfide couples Cys46 to Cys87. Asn52 and Asn92 each carry an N-linked (GlcNAc...) asparagine glycan. Residues 117–137 traverse the membrane as a helical segment; sequence GFLFAEIVSIFVLAVGVYFIA. Over 138-182 the chain is Cytoplasmic; that stretch reads GQDGVRQSRASDKQTLLPNDQLYQPLKDREDDQYSHLQGNQLRRN. Ser145 carries the phosphoserine modification. Phosphoserine; by PKC is present on Ser148. The ITAM domain maps to 149-177; sequence DKQTLLPNDQLYQPLKDREDDQYSHLQGN. Positions 153 to 154 match the Di-leucine motif motif; it reads LL.

As to quaternary structure, the TCR-CD3 complex is composed of a CD3D/CD3E and a CD3G/CD3E heterodimers that preferentially associate with TCRalpha and TCRbeta, respectively, to form TCRalpha/CD3E/CD3G and TCRbeta/CD3G/CD3E trimers. In turn, the hexamer interacts with CD3Z homodimer to form the TCR-CD3 complex. Alternatively, TCRalpha and TCRbeta can be replaced by TCRgamma and TCRdelta. In terms of processing, phosphorylated on Tyr residues after T-cell receptor triggering by LCK in association with CD4/CD8. Phosphorylated also by PKC; leading to the TCR complex down-regulation. Phosphorylated on Tyr residues after T-cell receptor triggering by LCK in association with CD4/CD8.

It is found in the cell membrane. Its function is as follows. Part of the TCR-CD3 complex present on T-lymphocyte cell surface that plays an essential role in adaptive immune response. When antigen presenting cells (APCs) activate T-cell receptor (TCR), TCR-mediated signals are transmitted across the cell membrane by the CD3 chains CD3D, CD3E, CD3G and CD3Z. All CD3 chains contain immunoreceptor tyrosine-based activation motifs (ITAMs) in their cytoplasmic domain. Upon TCR engagement, these motifs become phosphorylated by Src family protein tyrosine kinases LCK and FYN, resulting in the activation of downstream signaling pathways. In addition to this role of signal transduction in T-cell activation, CD3G plays an essential role in the dynamic regulation of TCR expression at the cell surface. Indeed, constitutive TCR cycling is dependent on the di-leucine-based (diL) receptor-sorting motif present in CD3G. This chain is T-cell surface glycoprotein CD3 gamma chain (CD3G), found in Homo sapiens (Human).